The chain runs to 97 residues: uncharacterized protein (97 aa).

To M.thermoautotrophicum MTH1236.

This is an uncharacterized protein from Methanocaldococcus jannaschii (strain ATCC 43067 / DSM 2661 / JAL-1 / JCM 10045 / NBRC 100440) (Methanococcus jannaschii).